Here is a 437-residue protein sequence, read N- to C-terminus: uncharacterized protein (437 aa).

A run of 2 helical transmembrane segments spans residues 102–122 and 272–292; these read GIYM…PVII and ILSI…ATVW.

Belongs to the herpesviridae UL49 family.

It is found in the host membrane. This is an uncharacterized protein from Connochaetes taurinus (Blue wildebeest).